The sequence spans 291 residues: ATP synthase gamma chain (291 aa).

It belongs to the ATPase gamma chain family. F-type ATPases have 2 components, CF(1) - the catalytic core - and CF(0) - the membrane proton channel. CF(1) has five subunits: alpha(3), beta(3), gamma(1), delta(1), epsilon(1). CF(0) has three main subunits: a, b and c.

The protein resides in the cell inner membrane. In terms of biological role, produces ATP from ADP in the presence of a proton gradient across the membrane. The gamma chain is believed to be important in regulating ATPase activity and the flow of protons through the CF(0) complex. The sequence is that of ATP synthase gamma chain from Chlorobium phaeobacteroides (strain DSM 266 / SMG 266 / 2430).